The primary structure comprises 440 residues: Discs overgrown protein kinase (440 aa).

Residues 9–277 (YRLGRKIGSG…HLRKLFRNLF (269 aa)) form the Protein kinase domain. Residues 15–23 (IGSGSFGDI) and Lys38 each bind ATP. The active-site Proton acceptor is Asp128. Residues 221–224 (KRQK) form a nuclear localization signal; essential for interaction with Bdbt and important for nuclear localization region. Ser333 and Ser334 each carry phosphoserine. The tract at residues 376–440 (SQLIGGNGLN…GGGGGVGNAK (65 aa)) is disordered. Positions 413 to 440 (QGGGGGGGGVGVGGMPSGGGGGGVGNAK) are enriched in gly residues.

The protein belongs to the protein kinase superfamily. CK1 Ser/Thr protein kinase family. Casein kinase I subfamily. In terms of assembly, forms a complex with per. Interacts with Dlish. Interacts (via nuclear localization signal) with Bdbt. Detected in the head (at protein level). Expressed in photoreceptor cells of the eyes as well as in the region situated between the optic lobe and the central brain.

It is found in the nucleus. It localises to the cytoplasm. Its subcellular location is the cytosol. The catalysed reaction is L-seryl-[protein] + ATP = O-phospho-L-seryl-[protein] + ADP + H(+). The enzyme catalyses L-threonyl-[protein] + ATP = O-phospho-L-threonyl-[protein] + ADP + H(+). Its function is as follows. Serine/threonine-protein kinase which is involved in the circadian rhythm pathway, viability and planar cell polarity. In the circadian rhythm pathway, phosphorylates the clock gene period (per) and targets it for degradation in the absence of timeless (tim), thus contributing to production of the circadian oscillations of the clock genes. Together with CkIalpha, regulates processing of ci by phosphorylating it, which promotes its binding to slmb, the F-box recognition component of the SCF(slmb) E3 ubiquitin-protein ligase. Involved in the inhibition of apoptosis during cell proliferation and growth arrest in imaginal disks. Also functions in planar cell polarity. The chain is Discs overgrown protein kinase (dco) from Drosophila melanogaster (Fruit fly).